A 263-amino-acid polypeptide reads, in one-letter code: 3-methyl-2-oxobutanoate hydroxymethyltransferase (263 aa).

2 residues coordinate Mg(2+): D45 and D84. 3-methyl-2-oxobutanoate contacts are provided by residues 45 to 46 (DS), D84, and K112. E114 contacts Mg(2+). E181 (proton acceptor) is an active-site residue.

This sequence belongs to the PanB family. As to quaternary structure, homodecamer; pentamer of dimers. Mg(2+) serves as cofactor.

It is found in the cytoplasm. The catalysed reaction is 3-methyl-2-oxobutanoate + (6R)-5,10-methylene-5,6,7,8-tetrahydrofolate + H2O = 2-dehydropantoate + (6S)-5,6,7,8-tetrahydrofolate. Its pathway is cofactor biosynthesis; (R)-pantothenate biosynthesis; (R)-pantoate from 3-methyl-2-oxobutanoate: step 1/2. In terms of biological role, catalyzes the reversible reaction in which hydroxymethyl group from 5,10-methylenetetrahydrofolate is transferred onto alpha-ketoisovalerate to form ketopantoate. The protein is 3-methyl-2-oxobutanoate hydroxymethyltransferase of Photorhabdus laumondii subsp. laumondii (strain DSM 15139 / CIP 105565 / TT01) (Photorhabdus luminescens subsp. laumondii).